The following is a 312-amino-acid chain: Malate dehydrogenase (312 aa).

Residues 12–17 (GAGFTG) and Asp-36 each bind NAD(+). Arg-87 and Arg-93 together coordinate substrate. NAD(+) contacts are provided by residues Asn-100 and 123 to 125 (LTN). Asn-125 is a substrate binding site. Ser-149 carries the phosphoserine modification. Arg-156 contacts substrate. His-180 serves as the catalytic Proton acceptor.

This sequence belongs to the LDH/MDH superfamily. MDH type 3 family.

It carries out the reaction (S)-malate + NAD(+) = oxaloacetate + NADH + H(+). In terms of biological role, catalyzes the reversible oxidation of malate to oxaloacetate. The polypeptide is Malate dehydrogenase (Bacillus cereus (strain ATCC 14579 / DSM 31 / CCUG 7414 / JCM 2152 / NBRC 15305 / NCIMB 9373 / NCTC 2599 / NRRL B-3711)).